The primary structure comprises 544 residues: Chaperonin GroEL 1 (544 aa).

Residues 29-32 (TLGP), 86-90 (DGTTT), Gly413, 476-478 (NAA), and Asp492 contribute to the ATP site. Positions 523-544 (EPVKAPAGGGDMDGMGGMGGMM) are disordered. Residues 529-544 (AGGGDMDGMGGMGGMM) are compositionally biased toward gly residues.

Belongs to the chaperonin (HSP60) family. Forms a cylinder of 14 subunits composed of two heptameric rings stacked back-to-back. Interacts with the co-chaperonin GroES.

It localises to the cytoplasm. The catalysed reaction is ATP + H2O + a folded polypeptide = ADP + phosphate + an unfolded polypeptide.. In terms of biological role, together with its co-chaperonin GroES, plays an essential role in assisting protein folding. The GroEL-GroES system forms a nano-cage that allows encapsulation of the non-native substrate proteins and provides a physical environment optimized to promote and accelerate protein folding. This chain is Chaperonin GroEL 1, found in Cutibacterium acnes (strain DSM 16379 / KPA171202) (Propionibacterium acnes).